The following is a 499-amino-acid chain: Na(+)/H(+) antiporter NhaB (499 aa).

The next 11 helical transmembrane spans lie at Pro33 to Phe53, Pro66 to Tyr86, Val89 to Met109, Ala128 to Leu148, Phe237 to Ile257, Ala305 to Ile325, Gly326 to Gly346, Phe349 to Ile369, Met393 to Val413, Ala449 to Ile469, and Val477 to Ile497.

This sequence belongs to the NhaB Na(+)/H(+) (TC 2.A.34) antiporter family.

Its subcellular location is the cell inner membrane. It catalyses the reaction 2 Na(+)(in) + 3 H(+)(out) = 2 Na(+)(out) + 3 H(+)(in). Its function is as follows. Na(+)/H(+) antiporter that extrudes sodium in exchange for external protons. The chain is Na(+)/H(+) antiporter NhaB from Hahella chejuensis (strain KCTC 2396).